We begin with the raw amino-acid sequence, 502 residues long: ATP synthase subunit alpha (502 aa).

An ATP-binding site is contributed by Gly169–Thr176.

This sequence belongs to the ATPase alpha/beta chains family. F-type ATPases have 2 components, CF(1) - the catalytic core - and CF(0) - the membrane proton channel. CF(1) has five subunits: alpha(3), beta(3), gamma(1), delta(1), epsilon(1). CF(0) has three main subunits: a(1), b(2) and c(9-12). The alpha and beta chains form an alternating ring which encloses part of the gamma chain. CF(1) is attached to CF(0) by a central stalk formed by the gamma and epsilon chains, while a peripheral stalk is formed by the delta and b chains.

The protein resides in the cell inner membrane. The enzyme catalyses ATP + H2O + 4 H(+)(in) = ADP + phosphate + 5 H(+)(out). In terms of biological role, produces ATP from ADP in the presence of a proton gradient across the membrane. The alpha chain is a regulatory subunit. This is ATP synthase subunit alpha from Pelobacter propionicus (strain DSM 2379 / NBRC 103807 / OttBd1).